A 161-amino-acid polypeptide reads, in one-letter code: Regulator of ribonuclease activity A (161 aa).

Belongs to the RraA family. In terms of assembly, homotrimer. Binds to both RNA-binding sites in the C-terminal region of Rne and to RhlB.

The protein localises to the cytoplasm. Globally modulates RNA abundance by binding to RNase E (Rne) and regulating its endonucleolytic activity. Can modulate Rne action in a substrate-dependent manner by altering the composition of the degradosome. Modulates RNA-binding and helicase activities of the degradosome. In Cronobacter sakazakii (strain ATCC BAA-894) (Enterobacter sakazakii), this protein is Regulator of ribonuclease activity A.